A 369-amino-acid polypeptide reads, in one-letter code: uncharacterized protein (369 aa).

Position 184 is an N6-(pyridoxal phosphate)lysine (K184).

This sequence belongs to the class-V pyridoxal-phosphate-dependent aminotransferase family. It depends on pyridoxal 5'-phosphate as a cofactor.

This is an uncharacterized protein from Helicobacter pylori (strain J99 / ATCC 700824) (Campylobacter pylori J99).